The sequence spans 461 residues: tRNA modification GTPase MnmE (461 aa).

The (6S)-5-formyl-5,6,7,8-tetrahydrofolate site is built by Arg-27, Glu-89, and Arg-128. In terms of domain architecture, TrmE-type G spans 224–382 (GLATAIVGQP…LEELINKLFF (159 aa)). Asn-234 contacts K(+). Residues 234–239 (NVGKSS), 253–259 (TDVAGTT), and 278–281 (DTAG) each bind GTP. Ser-238 serves as a coordination point for Mg(2+). Positions 253, 255, and 258 each coordinate K(+). Mg(2+) is bound at residue Thr-259. Lys-461 provides a ligand contact to (6S)-5-formyl-5,6,7,8-tetrahydrofolate.

It belongs to the TRAFAC class TrmE-Era-EngA-EngB-Septin-like GTPase superfamily. TrmE GTPase family. As to quaternary structure, homodimer. Heterotetramer of two MnmE and two MnmG subunits. K(+) is required as a cofactor.

It localises to the cytoplasm. Exhibits a very high intrinsic GTPase hydrolysis rate. Involved in the addition of a carboxymethylaminomethyl (cmnm) group at the wobble position (U34) of certain tRNAs, forming tRNA-cmnm(5)s(2)U34. The chain is tRNA modification GTPase MnmE from Lactobacillus acidophilus (strain ATCC 700396 / NCK56 / N2 / NCFM).